Here is a 475-residue protein sequence, read N- to C-terminus: Ammonium transporter 2 (475 aa).

Helical transmembrane passes span 27–47 (AATLVGLQSMPGLVILYASIV), 55–75 (SAFMALYAFAAVLLCWVLLCY), 120–140 (LVYFQFTFAAITTILVAGSVL), 148–168 (WMAFVPLWLIFSYTVGAYSIW), 183–203 (GGYVIHLSSGVAGFVAAYWVG), 218–238 (VLLMLAGAGLLWMGWSGFNGG), 254–274 (TNLSAATSLLVWTTLDVIFFG), 279–299 (IGAIQGMVTGLAGVTPGAGLI), 302–322 (WAAIIIGVVSGTAPWASMMII), 336–356 (LAVFYTHAVAGLLGGIMTGLF), and 389–409 (AGAAFIAVWNVVSTTIILLAI).

The protein belongs to the ammonia transporter channel (TC 1.A.11.2) family. Higher expression in shoots than roots.

Its subcellular location is the cell membrane. Its function is as follows. High affinity ammonium transporter that may play an important role in moving ammonium between the apoplast and symplast of cells throughout the plant. Does not transport methylammonium. The protein is Ammonium transporter 2 (AMT2) of Arabidopsis thaliana (Mouse-ear cress).